The primary structure comprises 426 residues: Glutamyl-tRNA reductase (426 aa).

Substrate-binding positions include 49–52 (TCNR), serine 101, 106–108 (EPQ), and glutamine 112. Cysteine 50 serves as the catalytic Nucleophile. Residue 181–186 (GAGETI) coordinates NADP(+). Positions 404 to 426 (DRLFPEKPGLPTSPHSYPDREDR) are disordered.

The protein belongs to the glutamyl-tRNA reductase family. Homodimer.

The catalysed reaction is (S)-4-amino-5-oxopentanoate + tRNA(Glu) + NADP(+) = L-glutamyl-tRNA(Glu) + NADPH + H(+). It participates in porphyrin-containing compound metabolism; protoporphyrin-IX biosynthesis; 5-aminolevulinate from L-glutamyl-tRNA(Glu): step 1/2. Catalyzes the NADPH-dependent reduction of glutamyl-tRNA(Glu) to glutamate 1-semialdehyde (GSA). This is Glutamyl-tRNA reductase from Xanthomonas campestris pv. phaseoli.